The sequence spans 374 residues: MTSPALKDPAKTRVIVGMSGGVDSSVSALLLMEQGYQVEGLFMKNWEEDDGTEYCTAREDLADAQAVCDRIGIKLHTANFAAEYWDNVFEHFLEEYKAGRTPNPDILCNREIKFKAFLDYALSLGADLIATGHYVRRRDTGELTELLKGLDPNKDQSYFLHAVGGKEIARTLFPVGELEKPEVRAIAEKHGLATAKKKDSTGICFIGERRFSDFLKQYLPAQPGEIQTTEGEVIGRHHGLMYHTIGQRQGLGIGGLKDAGDEPWYVLHKDLARNVLVVGQGNEHPWLFSRALLASEIFWVNPIDLSSPRRLTAKVRYRQGDQQCTLERTENGYRAMFDEPQRAVTPGQSVVFYDGEVCLGGGVIETAEPWSPRQ.

ATP contacts are provided by residues 17–24 (GMSGGVDS) and M43. Residues 103–105 (NPD) form an interaction with target base in tRNA region. The active-site Nucleophile is the C108. An intrachain disulfide couples C108 to C204. G132 lines the ATP pocket. The interval 154-156 (KDQ) is interaction with tRNA. C204 (cysteine persulfide intermediate) is an active-site residue. Positions 316–317 (RY) are interaction with tRNA.

The protein belongs to the MnmA/TRMU family.

It localises to the cytoplasm. The catalysed reaction is S-sulfanyl-L-cysteinyl-[protein] + uridine(34) in tRNA + AH2 + ATP = 2-thiouridine(34) in tRNA + L-cysteinyl-[protein] + A + AMP + diphosphate + H(+). Its function is as follows. Catalyzes the 2-thiolation of uridine at the wobble position (U34) of tRNA, leading to the formation of s(2)U34. The sequence is that of tRNA-specific 2-thiouridylase MnmA from Pseudomonas entomophila (strain L48).